A 216-amino-acid chain; its full sequence is uncharacterized protein (216 aa).

Residues 5–22 form a helical membrane-spanning segment; it reads LGLVFGSVILIYLISLFL.

It localises to the membrane. This is an uncharacterized protein from Aquifex aeolicus (strain VF5).